The following is a 237-amino-acid chain: Large ribosomal subunit protein uL3 (237 aa).

2 disordered regions span residues 133 to 155 (ASHG…DPGK) and 213 to 237 (PENA…EGGE). Residues 135–150 (HGNSITHRSHGSTGQR) are compositionally biased toward polar residues. The residue at position 151 (Q151) is an N5-methylglutamine. Residues 220 to 237 (AGLRAGAKAEAAATEGGE) are compositionally biased toward low complexity.

This sequence belongs to the universal ribosomal protein uL3 family. Part of the 50S ribosomal subunit. Forms a cluster with proteins L14 and L19. Post-translationally, methylated by PrmB.

In terms of biological role, one of the primary rRNA binding proteins, it binds directly near the 3'-end of the 23S rRNA, where it nucleates assembly of the 50S subunit. In Brucella abortus (strain S19), this protein is Large ribosomal subunit protein uL3.